Consider the following 3412-residue polypeptide: Genome polyprotein (3412 aa).

The tract at residues methionine 1–arginine 30 is disordered. Residues methionine 1 to alanine 98 lie on the Cytoplasmic side of the membrane. The propeptide at serine 97 to alanine 117 is ER anchor for the capsid protein C, removed in mature form by serine protease NS3. Residues valine 99–valine 119 form a helical membrane-spanning segment. Over arginine 120–tryptophan 242 the chain is Extracellular. An N-linked (GlcNAc...) asparagine; by host glycan is attached at asparagine 144. The chain crosses the membrane as a helical span at residues lysine 243 to glutamate 260. A topological domain (cytoplasmic) is located at residue serine 261. A helical membrane pass occupies residues valine 262 to alanine 280. The Extracellular portion of the chain corresponds to serine 281 to serine 727. Cystine bridges form between cysteine 283-cysteine 310, cysteine 340-cysteine 396, cysteine 340-cysteine 401, cysteine 354-cysteine 385, cysteine 372-cysteine 396, and cysteine 372-cysteine 401. The segment at aspartate 378–glycine 391 is fusion peptide. A glycan (N-linked (GlcNAc...) asparagine; by host) is linked at asparagine 434. 2 cysteine pairs are disulfide-bonded: cysteine 466-cysteine 570 and cysteine 587-cysteine 618. The chain crosses the membrane as a helical span at residues leucine 728–glycine 748. The Cytoplasmic portion of the chain corresponds to leucine 749–threonine 755. Residues methionine 756–alanine 776 traverse the membrane as a helical segment. Residues aspartate 777 to tyrosine 1187 are Extracellular-facing. Cystine bridges form between cysteine 780–cysteine 791, cysteine 831–cysteine 920, cysteine 955–cysteine 1000, cysteine 1057–cysteine 1106, cysteine 1068–cysteine 1090, and cysteine 1089–cysteine 1093. 3 N-linked (GlcNAc...) asparagine; by host glycosylation sites follow: asparagine 861, asparagine 983, and asparagine 999. A helical transmembrane segment spans residues valine 1188–leucine 1208. Over leucine 1209–threonine 1236 the chain is Cytoplasmic. A helical membrane pass occupies residues isoleucine 1237–tryptophan 1257. Topologically, residues lysine 1258–aspartate 1293 are lumenal. A helical transmembrane segment spans residues leucine 1294 to tryptophan 1314. Over lysine 1315 to threonine 1327 the chain is Cytoplasmic. Residues tryptophan 1328–phenylalanine 1348 traverse the membrane as a helical segment. The Cytoplasmic portion of the chain corresponds to tryptophan 1349–serine 1359. A helical transmembrane segment spans residues phenylalanine 1360–isoleucine 1378. Over arginine 1379 to serine 1382 the chain is Lumenal. The chain crosses the membrane as a helical span at residues glutamine 1383–threonine 1403. Topologically, residues arginine 1404–alanine 1454 are cytoplasmic. Positions alanine 1410 to glutamate 1449 are interacts with and activates NS3 protease. Residues phenylalanine 1455 to methionine 1475 constitute an intramembrane region (helical). The Cytoplasmic portion of the chain corresponds to glycine 1476 to alanine 2160. Positions serine 1490–proline 1669 constitute a Peptidase S7 domain. Residues histidine 1543, aspartate 1567, and serine 1627 each act as charge relay system; for serine protease NS3 activity in the active site. Residues threonine 1675–glutamate 1831 enclose the Helicase ATP-binding domain. Methionine 1688–threonine 1695 lines the ATP pocket. Positions aspartate 1779 to histidine 1782 match the DEAH box motif. The 160-residue stretch at aspartate 1841–tyrosine 2000 folds into the Helicase C-terminal domain. At lysine 1883 the chain carries N6-acetyllysine; by host. A helical transmembrane segment spans residues phenylalanine 2161–phenylalanine 2181. Residues valine 2182–arginine 2189 are Lumenal-facing. The segment at residues methionine 2190–serine 2210 is an intramembrane region (helical). A topological domain (lumenal) is located at residue tyrosine 2211. The helical transmembrane segment at glycine 2212–alanine 2232 threads the bilayer. At glycine 2233–alanine 2244 the chain is on the cytoplasmic side. Residues tyrosine 2245 to leucine 2265 traverse the membrane as a helical segment. Topologically, residues glutamate 2266 to serine 2299 are lumenal. An intramembrane region (helical) is located at residues tryptophan 2300–threonine 2320. Residues lysine 2321 to glycine 2343 lie on the Lumenal side of the membrane. The segment at residues alanine 2344–alanine 2364 is an intramembrane region (helical). Residues threonine 2365–serine 2368 are Lumenal-facing. Residues leucine 2369–alanine 2389 form a helical membrane-spanning segment. Residues glutamate 2390–lysine 2430 are Cytoplasmic-facing. A helical transmembrane segment spans residues methionine 2431–proline 2451. Residues serine 2452 to glycine 2476 lie on the Lumenal side of the membrane. A helical membrane pass occupies residues arginine 2477–leucine 2497. The Cytoplasmic portion of the chain corresponds to glycine 2498–isoleucine 3412. One can recognise an mRNA cap 0-1 NS5-type MT domain in the interval glycine 2511–cysteine 2775. Residue serine 2566 coordinates S-adenosyl-L-methionine. Phosphoserine is present on serine 2566. Lysine 2571 (for 2'-O-MTase activity) is an active-site residue. 5 residues coordinate S-adenosyl-L-methionine: glycine 2596, tryptophan 2597, isoleucine 2615, aspartate 2641, and valine 2642. Residue aspartate 2656 is the For 2'-O-MTase activity of the active site. S-adenosyl-L-methionine is bound at residue isoleucine 2657. Residues lysine 2693 and glutamate 2729 each act as for 2'-O-MTase activity in the active site. The interval glutamate 2729–serine 2733 is interaction with host SCRIB. S-adenosyl-L-methionine is bound at residue tyrosine 2731. Zn(2+)-binding residues include glutamate 2948, histidine 2952, cysteine 2957, and cysteine 2960. The RdRp catalytic domain occupies glycine 3038–alanine 3187. The Zn(2+) site is built by histidine 3222, cysteine 3238, and cysteine 3357.

The protein in the N-terminal section; belongs to the class I-like SAM-binding methyltransferase superfamily. mRNA cap 0-1 NS5-type methyltransferase family. In terms of assembly, homodimer. Interacts (via N-terminus) with host EXOC1 (via C-terminus); this interaction results in EXOC1 degradation through the proteasome degradation pathway. As to quaternary structure, forms heterodimers with envelope protein E in the endoplasmic reticulum and Golgi. Homodimer; in the endoplasmic reticulum and Golgi. Interacts with protein prM. Interacts with non-structural protein 1. In terms of assembly, homodimer; Homohexamer when secreted. Interacts with envelope protein E. As to quaternary structure, interacts (via N-terminus) with serine protease NS3. Forms a heterodimer with serine protease NS3. May form homooligomers. In terms of assembly, forms a heterodimer with NS2B. Interacts with non-structural protein 2A (via N-terminus). Interacts with NS4B. Interacts with unphosphorylated RNA-directed RNA polymerase NS5; this interaction stimulates RNA-directed RNA polymerase NS5 guanylyltransferase activity. As to quaternary structure, interacts with serine protease NS3. Interacts with NS1. Homodimer. Interacts with host STAT2; this interaction inhibits the phosphorylation of the latter, and, when all viral proteins are present (polyprotein), targets STAT2 for degradation. Interacts with serine protease NS3. Interacts with host SCRIB; this interaction targets NS5 to the cell membrane periphery and nucleus, thereby allowing efficient host nuclear STAT1 inhibition. In terms of processing, specific enzymatic cleavages in vivo yield mature proteins. Cleavages in the lumen of endoplasmic reticulum are performed by host signal peptidase, whereas cleavages in the cytoplasmic side are performed by serine protease NS3. Signal cleavage at the 2K-4B site requires a prior NS3 protease-mediated cleavage at the 4A-2K site. Post-translationally, cleaved in post-Golgi vesicles by a host furin, releasing the mature small envelope protein M, and peptide pr. This cleavage is incomplete as up to 30% of viral particles still carry uncleaved prM. N-glycosylated. In terms of processing, N-glycosylated. The excreted form is glycosylated and this is required for efficient secretion of the protein from infected cells. Post-translationally, acetylated by host KAT5. Acetylation modulates NS3 RNA-binding and unwinding activities and plays an important positive role for viral replication. Phosphorylated on serines residues. This phosphorylation may trigger NS5 nuclear localization.

The protein localises to the virion. It is found in the host nucleus. Its subcellular location is the host cytoplasm. The protein resides in the host perinuclear region. It localises to the secreted. The protein localises to the virion membrane. It is found in the host endoplasmic reticulum membrane. It catalyses the reaction Selective hydrolysis of -Xaa-Xaa-|-Yaa- bonds in which each of the Xaa can be either Arg or Lys and Yaa can be either Ser or Ala.. The enzyme catalyses RNA(n) + a ribonucleoside 5'-triphosphate = RNA(n+1) + diphosphate. It carries out the reaction a ribonucleoside 5'-triphosphate + H2O = a ribonucleoside 5'-diphosphate + phosphate + H(+). The catalysed reaction is ATP + H2O = ADP + phosphate + H(+). It catalyses the reaction a 5'-end (5'-triphosphoguanosine)-ribonucleoside in mRNA + S-adenosyl-L-methionine = a 5'-end (N(7)-methyl 5'-triphosphoguanosine)-ribonucleoside in mRNA + S-adenosyl-L-homocysteine. The enzyme catalyses a 5'-end (N(7)-methyl 5'-triphosphoguanosine)-ribonucleoside in mRNA + S-adenosyl-L-methionine = a 5'-end (N(7)-methyl 5'-triphosphoguanosine)-(2'-O-methyl-ribonucleoside) in mRNA + S-adenosyl-L-homocysteine + H(+). Plays a role in virus budding by binding to the cell membrane and gathering the viral RNA into a nucleocapsid that forms the core of a mature virus particle. During virus entry, may induce genome penetration into the host cytoplasm after hemifusion induced by the surface proteins. Can migrate to the cell nucleus where it modulates host functions. Its function is as follows. Inhibits RNA silencing by interfering with host Dicer. Functionally, prevents premature fusion activity of envelope proteins in trans-Golgi by binding to envelope protein E at pH6.0. After virion release in extracellular space, gets dissociated from E dimers. In terms of biological role, acts as a chaperone for envelope protein E during intracellular virion assembly by masking and inactivating envelope protein E fusion peptide. prM is the only viral peptide matured by host furin in the trans-Golgi network probably to avoid catastrophic activation of the viral fusion activity in acidic Golgi compartment prior to virion release. prM-E cleavage is inefficient, and many virions are only partially matured. These uncleaved prM would play a role in immune evasion. May play a role in virus budding. Exerts cytotoxic effects by activating a mitochondrial apoptotic pathway through M ectodomain. May display a viroporin activity. Its function is as follows. Binds to host cell surface receptor and mediates fusion between viral and cellular membranes. Envelope protein is synthesized in the endoplasmic reticulum in the form of heterodimer with protein prM. They play a role in virion budding in the ER, and the newly formed immature particle is covered with 60 spikes composed of heterodimer between precursor prM and envelope protein E. The virion is transported to the Golgi apparatus where the low pH causes dissociation of PrM-E heterodimers and formation of E homodimers. prM-E cleavage is inefficient, and many virions are only partially matured. These uncleaved prM would play a role in immune evasion. Functionally, involved in immune evasion, pathogenesis and viral replication. Once cleaved off the polyprotein, is targeted to three destinations: the viral replication cycle, the plasma membrane and the extracellular compartment. Essential for viral replication. Required for formation of the replication complex and recruitment of other non-structural proteins to the ER-derived membrane structures. Excreted as a hexameric lipoparticle that plays a role against host immune response. Antagonizing the complement function. Binds to the host macrophages and dendritic cells. Inhibits signal transduction originating from Toll-like receptor 3 (TLR3). In terms of biological role, component of the viral RNA replication complex that functions in virion assembly and antagonizes the host immune response. Required cofactor for the serine protease function of NS3. May have membrane-destabilizing activity and form viroporins. Its function is as follows. Displays three enzymatic activities: serine protease, NTPase and RNA helicase. NS3 serine protease, in association with NS2B, performs its autocleavage and cleaves the polyprotein at dibasic sites in the cytoplasm: C-prM, NS2A-NS2B, NS2B-NS3, NS3-NS4A, NS4A-2K and NS4B-NS5. NS3 RNA helicase binds RNA and unwinds dsRNA in the 3' to 5' direction. Functionally, regulates the ATPase activity of the NS3 helicase activity. NS4A allows NS3 helicase to conserve energy during unwinding. In terms of biological role, functions as a signal peptide for NS4B and is required for the interferon antagonism activity of the latter. Induces the formation of ER-derived membrane vesicles where the viral replication takes place. Inhibits interferon (IFN)-induced host STAT1 phosphorylation and nuclear translocation, thereby preventing the establishment of cellular antiviral state by blocking the IFN-alpha/beta pathway. Inhibits STAT2 translocation in the nucleus after IFN-alpha treatment. Its function is as follows. Replicates the viral (+) and (-) genome, and performs the capping of genomes in the cytoplasm. NS5 methylates viral RNA cap at guanine N-7 and ribose 2'-O positions. Besides its role in RNA genome replication, also prevents the establishment of cellular antiviral state by blocking the interferon-alpha/beta (IFN-alpha/beta) signaling pathway. Inhibits host TYK2 and STAT2 phosphorylation, thereby preventing activation of JAK-STAT signaling pathway. This Homo sapiens (Human) protein is Genome polyprotein.